The chain runs to 352 residues: MITYGSGDLLRADTEALVNTVNCVGVMGKGIALQFKRRYPEMFTAYEKACKRGEVTIGKMFVVDTGQLDGPKHIINFPTKKHWRAPSKLAYIDAGLIDLIRVIRELNIASVAVPPLGVGNGGLDWEDVEQRLVSAFQQLPDVDAVIYPPSGGSRAIEGVEGLRMTWGRAVILEAMRRYLQQRRAMEPWEDPAGISHLEIQKLMYFANEADPDLALDFTPGRYGPYSERVRHLLQGMEGAFTVGLGDGTARVLANQPISLTTKGTDAITDYLATDAAADRVSAAVDTVLRVIEGFEGPYGVELLASTHWVATREGAKEPATAAAAVRKWTKRKGRIYSDDRIGVALDRILMTA.

The Macro domain occupies 1 to 155; that stretch reads MITYGSGDLL…IYPPSGGSRA (155 aa). ADP-D-ribose-binding positions include 8–9, 20–22, 31–34, and Thr79; these read DL, TVN, and IALQ. Lys80 serves as the catalytic Nucleophile. Position 117–121 (117–121) interacts with ADP-D-ribose; sequence GVGNG. Residues 164-352 are interaction with DarT; sequence MTWGRAVILE…VALDRILMTA (189 aa).

The protein belongs to the DarG ADP-ribosyl glycohydrolase family. As to quaternary structure, interacts (via C-terminus) with cognate toxin DarT; this heterodimeric complex neutralizes the toxic effect of DarT by preventing ssDNA binding to DarT and consequently inactivating the toxin by direct protein-protein interactions.

It catalyses the reaction an N-(ADP-alpha-D-ribosyl)-thymidine in DNA + H2O = a thymidine in DNA + ADP-D-ribose. Antitoxin component of the hybrid type II/IV toxin-antitoxin (TA) system DarTG, which plays a crucial role in controlling bacterial growth and bacteriophage infection. De-ADP-ribosylates DNA (probably) modified on thymidine by its cognate toxin DarT, which neutralizes the activity of cognate toxin DarT. This chain is DNA ADP-ribosyl glycohydrolase, found in Mycobacterium bovis (strain BCG / Pasteur 1173P2).